We begin with the raw amino-acid sequence, 131 residues long: Heat shock protein 15 homolog (131 aa).

An S4 RNA-binding domain is found at 6–67 (VRLDKWLWAA…NEEKEIKIIA (62 aa)). A disordered region spans residues 98–131 (ARKNNSLSMPHPDRRPNKKERRDLLKFKHQDKFE). The segment covering 108–131 (HPDRRPNKKERRDLLKFKHQDKFE) has biased composition (basic and acidic residues).

The protein belongs to the HSP15 family.

Its function is as follows. Involved in the recycling of free 50S ribosomal subunits that still carry a nascent chain. Binds RNA more specifically than DNA. Binds with very high affinity to the free 50S ribosomal subunit. Does not bind it when it is part of the 70S ribosome. The chain is Heat shock protein 15 homolog (hslR) from Haemophilus influenzae (strain ATCC 51907 / DSM 11121 / KW20 / Rd).